Consider the following 293-residue polypeptide: MATH domain and coiled-coil domain-containing protein At3g58400 (293 aa).

Positions 3–126 constitute an MATH domain; that stretch reads RSRSQNLITE…NGELKIVAEI (124 aa). Positions 227–285 form a coiled coil; the sequence is KLDWLENKLYEVAQKKEDDEAGETRLREMEEKLKDLKLKCSKMEALVEEEKAKVSAAKA.

The protein is MATH domain and coiled-coil domain-containing protein At3g58400 of Arabidopsis thaliana (Mouse-ear cress).